The sequence spans 201 residues: FMN-dependent NADH:quinone oxidoreductase (201 aa).

FMN is bound by residues S10, S16–S18, M96–F99, and S140–G143.

The protein belongs to the azoreductase type 1 family. In terms of assembly, homodimer. FMN serves as cofactor.

It carries out the reaction 2 a quinone + NADH + H(+) = 2 a 1,4-benzosemiquinone + NAD(+). The catalysed reaction is N,N-dimethyl-1,4-phenylenediamine + anthranilate + 2 NAD(+) = 2-(4-dimethylaminophenyl)diazenylbenzoate + 2 NADH + 2 H(+). In terms of biological role, quinone reductase that provides resistance to thiol-specific stress caused by electrophilic quinones. Its function is as follows. Also exhibits azoreductase activity. Catalyzes the reductive cleavage of the azo bond in aromatic azo compounds to the corresponding amines. The chain is FMN-dependent NADH:quinone oxidoreductase from Yersinia enterocolitica serotype O:8 / biotype 1B (strain NCTC 13174 / 8081).